A 192-amino-acid polypeptide reads, in one-letter code: Ion-translocating oxidoreductase complex subunit A (192 aa).

6 consecutive transmembrane segments (helical) span residues 5–25 (ILLL…FLGL), 39–59 (IGMG…AYLV), 67–87 (LGIE…VVQF), 102–122 (LLGI…VALL), 134–154 (IIYG…FASM), and 171–191 (SIAM…TGLV).

This sequence belongs to the NqrDE/RnfAE family. As to quaternary structure, the complex is composed of six subunits: RnfA, RnfB, RnfC, RnfD, RnfE and RnfG.

Its subcellular location is the cell inner membrane. Functionally, part of a membrane-bound complex that couples electron transfer with translocation of ions across the membrane. In Vibrio campbellii (strain ATCC BAA-1116), this protein is Ion-translocating oxidoreductase complex subunit A.